Consider the following 810-residue polypeptide: RING finger protein unkempt homolog (810 aa).

A disordered region spans residues 1-24; the sequence is MSKGPGPGGSAASSAPPAATAQVL. Positions 10 to 19 are enriched in low complexity; the sequence is SAASSAPPAA. 5 C3H1-type zinc fingers span residues 84 to 113, 124 to 154, 215 to 241, 251 to 285, and 293 to 321; these read YSPD…HRTT, YYKT…HGPH, NYKT…HNSK, KYRS…HTRT, and IYKS…HVEQ. A disordered region spans residues 239–265; sequence NSKDRRRSPRKHKYRSSPCPNVKHGDE. Position 240 is a phosphoserine (serine 240). The span at 241 to 253 shows a compositional bias: basic residues; that stretch reads KDRRRSPRKHKYR. Residues 324-343 are disordered; sequence LSDDLQPSSAVSSPTQPGPV. Residues 328 to 338 show a composition bias toward polar residues; it reads LQPSSAVSSPT. Residues serine 374, serine 378, serine 385, and serine 631 each carry the phosphoserine modification. Residues 643–723 adopt a coiled-coil conformation; the sequence is GAAELARLRQ…QEELERLHAG (81 aa). Residues 766-801 form an RING-type; degenerate zinc finger; it reads SVKCLKCQEQKRAVLPCQHAALCELCAEGSECPICQ.

It belongs to the unkempt family.

The protein localises to the cytoplasm. Functionally, sequence-specific RNA-binding protein which plays an important role in the establishment and maintenance of the early morphology of cortical neurons during embryonic development. Acts as a translation repressor and controls a translationally regulated cell morphology program to ensure proper structuring of the nervous system. Translational control depends on recognition of its binding element within target mRNAs which consists of a mandatory UAG trimer upstream of a U/A-rich motif. Associated with polysomes. The sequence is that of RING finger protein unkempt homolog (UNK) from Homo sapiens (Human).